The chain runs to 205 residues: Urease accessory protein UreE (205 aa).

The segment covering 178–196 (AHFHAGGHGHVHSGHGHGG) has biased composition (basic residues). A disordered region spans residues 178–205 (AHFHAGGHGHVHSGHGHGGKHGEHDAES).

It belongs to the UreE family.

It localises to the cytoplasm. Functionally, involved in urease metallocenter assembly. Binds nickel. Probably functions as a nickel donor during metallocenter assembly. The protein is Urease accessory protein UreE of Bordetella pertussis (strain Tohama I / ATCC BAA-589 / NCTC 13251).